A 389-amino-acid polypeptide reads, in one-letter code: Na(+)/H(+) antiporter NhaA 1 (389 aa).

Helical transmembrane passes span Ala14–Leu34, Phe47–Ile67, Ile87–Phe107, Gly117–Gly137, Val146–Phe166, Leu171–Ala191, Leu197–His217, Val252–Val272, Met280–Phe300, Ile321–Leu341, and Leu356–Ser376.

The protein belongs to the NhaA Na(+)/H(+) (TC 2.A.33) antiporter family.

It localises to the cell inner membrane. The catalysed reaction is Na(+)(in) + 2 H(+)(out) = Na(+)(out) + 2 H(+)(in). Na(+)/H(+) antiporter that extrudes sodium in exchange for external protons. This Vibrio vulnificus (strain CMCP6) protein is Na(+)/H(+) antiporter NhaA 1.